The chain runs to 662 residues: Envelope glycoprotein (662 aa).

A signal peptide spans 1–34 (MEGPTHPKPSKDKTFSWDLMILVGVLLRLDVGMA). The Extracellular portion of the chain corresponds to 35-606 (NPSPHQIYNV…FNKSPWFTTL (572 aa)). Residues Asn43 and Asn58 are each glycosylated (N-linked (GlcNAc...) asparagine; by host). Intrachain disulfides connect Cys115/Cys132 and Cys124/Cys137. Residues 251 to 281 (VLPDQKPPSRQSQIESRVTPHHSQGNGGTPG) form a disordered region. Over residues 258 to 274 (PSRQSQIESRVTPHHSQ) the composition is skewed to polar residues. Residues Asn286, Asn322, and Asn327 are each glycosylated (N-linked (GlcNAc...) asparagine; by host). Cystine bridges form between Cys332–Cys335, Cys332–Cys559, and Cys551–Cys558. Positions 332 to 335 (CWLC) match the CXXC motif. N-linked (GlcNAc...) asparagine; by host glycosylation is found at Asn351, Asn354, and Asn430. The fusion peptide stretch occupies residues 468–488 (ISLTVALMLGGLTVGGIAAGV). 2 coiled-coil regions span residues 496-545 (LETA…ILFL) and 555-591 (KEEC…SQQG). Positions 534 to 550 (LQNRRGLDILFLQEGGL) are immunosuppression. The CX6CC signature appears at 551–559 (CAALKEECC). Residues 607-627 (ISSIMGPLLILLLILLFGPCI) traverse the membrane as a helical segment. A lipid anchor (S-palmitoyl cysteine; by host) is attached at Cys626. At 628–662 (LNRLVQFVKDRISVVQALILTQQYQQIKQYDPDQP) the chain is on the cytoplasmic side.

The mature envelope protein (Env) consists of a trimer of SU-TM heterodimers attached by a labile interchain disulfide bond. Specific enzymatic cleavages in vivo yield mature proteins. Envelope glycoproteins are synthesized as an inactive precursor that is N-glycosylated and processed likely by host cell furin or by a furin-like protease in the Golgi to yield the mature SU and TM proteins. The cleavage site between SU and TM requires the minimal sequence [KR]-X-[KR]-R. The R-peptide is released from the C-terminus of the cytoplasmic tail of the TM protein upon particle formation as a result of proteolytic cleavage by the viral protease. Cleavage of this peptide is required for TM to become fusogenic. In terms of processing, the CXXC motif is highly conserved across a broad range of retroviral envelope proteins. It is thought to participate in the formation of a labile disulfide bond possibly with the CX6CC motif present in the transmembrane protein. Isomerization of the intersubunit disulfide bond to an SU intrachain disulfide bond is thought to occur upon receptor recognition in order to allow membrane fusion. Post-translationally, the transmembrane protein is palmitoylated. The R-peptide is palmitoylated.

It is found in the virion membrane. The protein resides in the host cell membrane. Functionally, the surface protein (SU) attaches the virus to the host cell by binding to its receptor. This interaction triggers the refolding of the transmembrane protein (TM) and is thought to activate its fusogenic potential by unmasking its fusion peptide. Fusion occurs at the host cell plasma membrane. Its function is as follows. The transmembrane protein (TM) acts as a class I viral fusion protein. Under the current model, the protein has at least 3 conformational states: pre-fusion native state, pre-hairpin intermediate state, and post-fusion hairpin state. During viral and target cell membrane fusion, the coiled coil regions (heptad repeats) assume a trimer-of-hairpins structure, positioning the fusion peptide in close proximity to the C-terminal region of the ectodomain. The formation of this structure appears to drive apposition and subsequent fusion of viral and target cell membranes. Membranes fusion leads to delivery of the nucleocapsid into the cytoplasm. This Felis catus (Cat) protein is Envelope glycoprotein (env).